We begin with the raw amino-acid sequence, 244 residues long: Mast cell protease 2 (244 aa).

Residues 1–18 form the signal peptide; the sequence is MQALLFLMALLLPSGAGA. Positions 19-20 are cleaved as a propeptide — activation peptide; the sequence is EE. One can recognise a Peptidase S1 domain in the interval 21-242; the sequence is IIGGVEAKPH…YLPWIYKVLK (222 aa). N44 is a glycosylation site (N-linked (GlcNAc...) asparagine). The cysteines at positions 50 and 66 are disulfide-linked. Catalysis depends on charge relay system residues H65 and D109. 2 disulfide bridges follow: C143-C208 and C174-C187. The Charge relay system role is filled by S202.

Belongs to the peptidase S1 family. Granzyme subfamily. As to expression, mucosal mast cells.

This is Mast cell protease 2 (Mcpt2) from Mus musculus (Mouse).